Here is a 238-residue protein sequence, read N- to C-terminus: Ribonuclease PH (238 aa).

Phosphate is bound by residues R86 and 124–126; that span reads GTR.

It belongs to the RNase PH family. In terms of assembly, homohexameric ring arranged as a trimer of dimers.

It carries out the reaction tRNA(n+1) + phosphate = tRNA(n) + a ribonucleoside 5'-diphosphate. Phosphorolytic 3'-5' exoribonuclease that plays an important role in tRNA 3'-end maturation. Removes nucleotide residues following the 3'-CCA terminus of tRNAs; can also add nucleotides to the ends of RNA molecules by using nucleoside diphosphates as substrates, but this may not be physiologically important. Probably plays a role in initiation of 16S rRNA degradation (leading to ribosome degradation) during starvation. This chain is Ribonuclease PH, found in Brucella anthropi (strain ATCC 49188 / DSM 6882 / CCUG 24695 / JCM 21032 / LMG 3331 / NBRC 15819 / NCTC 12168 / Alc 37) (Ochrobactrum anthropi).